We begin with the raw amino-acid sequence, 507 residues long: Probable Xaa-Pro aminopeptidase ARB_01886 (507 aa).

Mn(2+)-binding residues include Asp-275, Asp-286, Glu-434, and Glu-478.

This sequence belongs to the peptidase M24B family. It depends on Mn(2+) as a cofactor.

The enzyme catalyses Release of any N-terminal amino acid, including proline, that is linked to proline, even from a dipeptide or tripeptide.. Its function is as follows. Catalyzes the removal of a penultimate prolyl residue from the N-termini of peptides. This Arthroderma benhamiae (strain ATCC MYA-4681 / CBS 112371) (Trichophyton mentagrophytes) protein is Probable Xaa-Pro aminopeptidase ARB_01886.